The primary structure comprises 147 residues: Austinoid biosynthesis cluster protein H (147 aa).

Belongs to the trt14 isomerase family. As to quaternary structure, homodimer.

It participates in secondary metabolite biosynthesis; terpenoid biosynthesis. Functionally, part of the gene cluster that mediates the biosynthesis of calidodehydroaustin, a fungal meroterpenoid. The first step of the pathway is the synthesis of 3,5-dimethylorsellinic acid by the polyketide synthase ausA. 3,5-dimethylorsellinic acid is then prenylated by the polyprenyl transferase ausN. Further epoxidation by the FAD-dependent monooxygenase ausM and cyclization by the probable terpene cyclase ausL lead to the formation of protoaustinoid A. Protoaustinoid A is then oxidized to spiro-lactone preaustinoid A3 by the combined action of the FAD-binding monooxygenases ausB and ausC, and the dioxygenase ausE. Acid-catalyzed keto-rearrangement and ring contraction of the tetraketide portion of preaustinoid A3 by ausJ lead to the formation of preaustinoid A4. The aldo-keto reductase ausK, with the help of ausH, is involved in the next step by transforming preaustinoid A4 into isoaustinone which is in turn hydroxylated by the P450 monooxygenase ausI to form austinolide. The cytochrome P450 monooxygenase ausG modifies austinolide to austinol. Austinol is further acetylated to austin by the O-acetyltransferase ausP, which spontaneously changes to dehydroaustin. The cytochrome P450 monooxygenase ausR then converts dehydroaustin is into 7-dehydrodehydroaustin. The hydroxylation catalyzed by ausR permits the O-acetyltransferase ausQ to add an additional acetyl group to the molecule, leading to the formation of acetoxydehydroaustin. The short chain dehydrogenase ausT catalyzes the reduction of the double bond present between carbon atoms 1 and 2 to convert 7-dehydrodehydroaustin into 1,2-dihydro-7-hydroxydehydroaustin. AusQ catalyzes not only an acetylation reaction but also the addition of the PKS ausV diketide product to 1,2-dihydro-7-hydroxydehydroaustin, forming precalidodehydroaustin. Finally, the iron/alpha-ketoglutarate-dependent dioxygenase converts precalidodehydroaustin into calidodehydroaustin. This is Austinoid biosynthesis cluster protein H from Aspergillus calidoustus.